The primary structure comprises 271 residues: ATP synthase subunit delta (271 aa).

It belongs to the ATPase delta chain family. In terms of assembly, F-type ATPases have 2 components, F(1) - the catalytic core - and F(0) - the membrane proton channel. F(1) has five subunits: alpha(3), beta(3), gamma(1), delta(1), epsilon(1). F(0) has three main subunits: a(1), b(2) and c(10-14). The alpha and beta chains form an alternating ring which encloses part of the gamma chain. F(1) is attached to F(0) by a central stalk formed by the gamma and epsilon chains, while a peripheral stalk is formed by the delta and b chains.

The protein resides in the cell membrane. In terms of biological role, f(1)F(0) ATP synthase produces ATP from ADP in the presence of a proton or sodium gradient. F-type ATPases consist of two structural domains, F(1) containing the extramembraneous catalytic core and F(0) containing the membrane proton channel, linked together by a central stalk and a peripheral stalk. During catalysis, ATP synthesis in the catalytic domain of F(1) is coupled via a rotary mechanism of the central stalk subunits to proton translocation. Its function is as follows. This protein is part of the stalk that links CF(0) to CF(1). It either transmits conformational changes from CF(0) to CF(1) or is implicated in proton conduction. This Corynebacterium aurimucosum (strain ATCC 700975 / DSM 44827 / CIP 107346 / CN-1) (Corynebacterium nigricans) protein is ATP synthase subunit delta.